The primary structure comprises 327 residues: Small ribosomal subunit protein uS4m (327 aa).

Positions 96-154 constitute an S4 RNA-binding domain; that stretch reads SRLDMSIHRALFASSALQARQLVLHGKVHVNGKPERRAYRQLLPGDLVTVDQKSVMNCV. A compositionally biased stretch (polar residues) spans 156 to 173; sequence ASSNNTPSIQDGKQTEQV. The disordered stretch occupies residues 156-199; that stretch reads ASSNNTPSIQDGKQTEQVSSKDGENEKKKDNDDDLFEQTSNGKL. Over residues 174–186 the composition is skewed to basic and acidic residues; sequence SSKDGENEKKKDN.

The protein belongs to the universal ribosomal protein uS4 family. As to quaternary structure, component of the mitochondrial small ribosomal subunit (mt-SSU). Mature yeast 74S mitochondrial ribosomes consist of a small (37S) and a large (54S) subunit. The 37S small subunit contains a 15S ribosomal RNA (15S mt-rRNA) and at least 32 different proteins. The 54S large subunit contains a 21S rRNA (21S mt-rRNA) and at least 45 different proteins. uS3m, uS4m and uS5m form the narrow entry site of the mRNA channel.

The protein localises to the mitochondrion. Its function is as follows. Component of the mitochondrial ribosome (mitoribosome), a dedicated translation machinery responsible for the synthesis of mitochondrial genome-encoded proteins, including at least some of the essential transmembrane subunits of the mitochondrial respiratory chain. The mitoribosomes are attached to the mitochondrial inner membrane and translation products are cotranslationally integrated into the membrane. The chain is Small ribosomal subunit protein uS4m (nam9) from Schizosaccharomyces pombe (strain 972 / ATCC 24843) (Fission yeast).